Reading from the N-terminus, the 37-residue chain is Large ribosomal subunit protein bL36c (37 aa).

The protein belongs to the bacterial ribosomal protein bL36 family.

It localises to the plastid. It is found in the chloroplast. The chain is Large ribosomal subunit protein bL36c from Pelargonium hortorum (Common geranium).